The sequence spans 557 residues: Formate--tetrahydrofolate ligase (557 aa).

ATP is bound at residue 65–72 (TPAGEGKT).

Belongs to the formate--tetrahydrofolate ligase family.

The enzyme catalyses (6S)-5,6,7,8-tetrahydrofolate + formate + ATP = (6R)-10-formyltetrahydrofolate + ADP + phosphate. Its pathway is one-carbon metabolism; tetrahydrofolate interconversion. This chain is Formate--tetrahydrofolate ligase, found in Zymomonas mobilis subsp. mobilis (strain ATCC 31821 / ZM4 / CP4).